A 435-amino-acid chain; its full sequence is Glucan 1,3-beta-glucosidase (435 aa).

Positions 1-30 (MLFPVLHLPKAMKFSSFSLIASSLLSLVAA) are cleaved as a signal peptide. Catalysis depends on Glu-222, which acts as the Proton donor. Disulfide bonds link Cys-306/Cys-432 and Cys-331/Cys-357. Glu-323 acts as the Nucleophile in catalysis.

The protein belongs to the glycosyl hydrolase 5 (cellulase A) family.

It localises to the secreted. It carries out the reaction Successive hydrolysis of beta-D-glucose units from the non-reducing ends of (1-&gt;3)-beta-D-glucans, releasing alpha-glucose.. Beta-glucanases participate in the metabolism of beta-glucan, the main structural component of the cell wall. It could also function biosynthetically as a transglycosylase. This Pichia angusta (Yeast) protein is Glucan 1,3-beta-glucosidase.